A 455-amino-acid chain; its full sequence is ATP-dependent protease ATPase subunit HslU (455 aa).

Residues Val23, 65–70 (GVGKTE), Asp266, Glu333, and Arg405 contribute to the ATP site.

Belongs to the ClpX chaperone family. HslU subfamily. As to quaternary structure, a double ring-shaped homohexamer of HslV is capped on each side by a ring-shaped HslU homohexamer. The assembly of the HslU/HslV complex is dependent on binding of ATP.

Its subcellular location is the cytoplasm. ATPase subunit of a proteasome-like degradation complex; this subunit has chaperone activity. The binding of ATP and its subsequent hydrolysis by HslU are essential for unfolding of protein substrates subsequently hydrolyzed by HslV. HslU recognizes the N-terminal part of its protein substrates and unfolds these before they are guided to HslV for hydrolysis. This chain is ATP-dependent protease ATPase subunit HslU, found in Xanthomonas euvesicatoria pv. vesicatoria (strain 85-10) (Xanthomonas campestris pv. vesicatoria).